The sequence spans 224 residues: 3-dehydroquinate dehydratase (224 aa).

3-dehydroquinate contacts are provided by residues 30-32 (EWR) and R62. H118 acts as the Proton donor/acceptor in catalysis. K143 functions as the Schiff-base intermediate with substrate in the catalytic mechanism. 3 residues coordinate 3-dehydroquinate: R186, S205, and Q209.

This sequence belongs to the type-I 3-dehydroquinase family. As to quaternary structure, homodimer.

The enzyme catalyses 3-dehydroquinate = 3-dehydroshikimate + H2O. It functions in the pathway metabolic intermediate biosynthesis; chorismate biosynthesis; chorismate from D-erythrose 4-phosphate and phosphoenolpyruvate: step 3/7. Its function is as follows. Involved in the third step of the chorismate pathway, which leads to the biosynthesis of aromatic amino acids. Catalyzes the cis-dehydration of 3-dehydroquinate (DHQ) and introduces the first double bond of the aromatic ring to yield 3-dehydroshikimate. This Streptococcus suis (strain 98HAH33) protein is 3-dehydroquinate dehydratase.